The primary structure comprises 218 residues: MPSTRYQKINAHHYRHIWVVGDIHGEYQLLQSRLHQLSFFPKIDLLISVGDNIDRGPESLDVLRLLNQPWFTSVKGNHEAMALEAFETGDGNMWLASGGDWFFDLNDSEQQEAIDLLLKFHHLPHIIEITNDNIKYAIAHADYPGSEYLFGKEIAESELLWPVDRVQKSLNGELQQINGADYFIFGHMMFDNIQTFANQIYIDTGSPNSGRLSFYKIK.

Mn(2+)-binding residues include Asp22, His24, Asp51, and Asn77. The active-site Proton donor is the His78. Residue His187 participates in Mn(2+) binding.

This sequence belongs to the PPP phosphatase family. It depends on Mn(2+) as a cofactor.

It carries out the reaction O-phospho-L-seryl-[protein] + H2O = L-seryl-[protein] + phosphate. It catalyses the reaction O-phospho-L-threonyl-[protein] + H2O = L-threonyl-[protein] + phosphate. Its function is as follows. Has been shown, in vitro, to act on Ser, Thr and Tyr-phosphorylated substrates. This is Serine/threonine-protein phosphatase 2 (pphB) from Escherichia coli (strain K12).